The chain runs to 492 residues: GTPase Der (492 aa).

2 EngA-type G domains span residues 3-167 (FTLA…DAYA) and 201-381 (LQVA…EVWN). Residues 9 to 16 (GRPNVGKS), 56 to 60 (DTAGL), 119 to 122 (NKAE), 207 to 214 (GRPNAGKS), 259 to 263 (DTAGM), and 324 to 327 (NKWD) each bind GTP. A KH-like domain is found at 382–468 (RRVTTAQLNR…RLWMRGQNDA (87 aa)). The disordered stretch occupies residues 462–492 (MRGQNDANPYKGRKKAPPSKLRKHTDGRRKD). The segment covering 472–492 (KGRKKAPPSKLRKHTDGRRKD) has biased composition (basic residues).

The protein belongs to the TRAFAC class TrmE-Era-EngA-EngB-Septin-like GTPase superfamily. EngA (Der) GTPase family. As to quaternary structure, associates with the 50S ribosomal subunit.

Functionally, GTPase that plays an essential role in the late steps of ribosome biogenesis. The chain is GTPase Der from Roseobacter denitrificans (strain ATCC 33942 / OCh 114) (Erythrobacter sp. (strain OCh 114)).